The primary structure comprises 166 residues: MSSDVSPPPLLSAEAAAQLATAPPVFTTEQILEILPHRYPFLLVDRVVEYQPGQRAVGLKNVTFNEPFFQGHFPNRPIMPGVLIVEAMAQIGGIVLTKLPDVAGRLALFAGIDGVRFRRPVLPGDQLLLSADLLTIRQRRIGKMFCRAQVGGQLVTEGELMFSLVD.

H72 is an active-site residue.

Belongs to the thioester dehydratase family. FabZ subfamily.

Its subcellular location is the cytoplasm. It catalyses the reaction a (3R)-hydroxyacyl-[ACP] = a (2E)-enoyl-[ACP] + H2O. Functionally, involved in unsaturated fatty acids biosynthesis. Catalyzes the dehydration of short chain beta-hydroxyacyl-ACPs and long chain saturated and unsaturated beta-hydroxyacyl-ACPs. The protein is 3-hydroxyacyl-[acyl-carrier-protein] dehydratase FabZ of Synechococcus sp. (strain JA-2-3B'a(2-13)) (Cyanobacteria bacterium Yellowstone B-Prime).